The sequence spans 393 residues: MGPAMDEVTFKSDTVLSDVHLYTPNQRHLMVRLNGMGQPVFLSQFKLLWSRDSWTDSGAEDSGPTDVSTEEMPPAGSGSGHSHEDLSLQAGDDNTIQEGLSVPLDEDGDLDVVRRPRAASDPNPAEPARDKVHPTILAQEEDDLVGDQEYESCPHSIIKIEHTMATPLEDVGKQVWRGALLLADYILFRRDLFQGCTVLELGAGTGLASIVAATMAHTVYCTDVGTDLLAMCQRNVALNSHLTATGGGVVKVKELDWLKDNLCTDPKAPFSWSEEEIADLYDHTTVLLAAEVFYDDDLTNALFNTLSRLVHRLKNACTAIFSVEKRFNFTLRHLDVTCEAYDHFRASLDSLEKLADGRLRFMVEPVEASFPQLLVYERIRQLELWKIVVEPAA.

The tract at residues 54 to 87 (WTDSGAEDSGPTDVSTEEMPPAGSGSGHSHEDLS) is disordered. Residue Ser120 is modified to Phosphoserine.

The protein belongs to the methyltransferase superfamily. METTL22 family. In terms of assembly, interacts with members of the heat shock protein 90 and 70 families; these proteins probably are methylation substrates.

The protein resides in the nucleus. It catalyses the reaction L-lysyl-[protein] + 3 S-adenosyl-L-methionine = N(6),N(6),N(6)-trimethyl-L-lysyl-[protein] + 3 S-adenosyl-L-homocysteine + 3 H(+). Functionally, protein N-lysine methyltransferase. Trimethylates KIN at Lys-135 (in vitro). In Mus musculus (Mouse), this protein is Methyltransferase-like protein 22 (Mettl22).